Consider the following 187-residue polypeptide: TATA-box-binding protein (187 aa).

Tandem repeats lie at residues Ile-10–Leu-86 and Val-101–Leu-179.

Belongs to the TBP family.

General factor that plays a role in the activation of archaeal genes transcribed by RNA polymerase. Binds specifically to the TATA box promoter element which lies close to the position of transcription initiation. This is TATA-box-binding protein from Natronomonas pharaonis (strain ATCC 35678 / DSM 2160 / CIP 103997 / JCM 8858 / NBRC 14720 / NCIMB 2260 / Gabara) (Halobacterium pharaonis).